Reading from the N-terminus, the 464-residue chain is Protein FAM90A15 (464 aa).

3 disordered regions span residues 1-42, 70-389, and 415-437; these read MMAR…DPRL, PATL…HDGA, and HSPE…SEAP. Basic and acidic residues-rich tracts occupy residues 74-89 and 97-114; these read GKKE…KPRV and NKDK…DPQR. Positions 180–197 are enriched in low complexity; sequence LASLSPLRKASLSSSSSL.

The protein belongs to the FAM90 family.

The protein is Protein FAM90A15 of Homo sapiens (Human).